We begin with the raw amino-acid sequence, 131 residues long: UPF0102 protein YraN (131 aa).

Polar residues predominate over residues 1 to 19 (MATVPTRSGSPRQLTTKQT). Residues 1 to 20 (MATVPTRSGSPRQLTTKQTG) form a disordered region.

It belongs to the UPF0102 family.

This is UPF0102 protein YraN from Shigella boydii serotype 18 (strain CDC 3083-94 / BS512).